Reading from the N-terminus, the 261-residue chain is uncharacterized protein (261 aa).

In terms of domain architecture, Response regulatory spans Thr-7–Gln-122. 4-aspartylphosphate is present on Asp-54. In terms of domain architecture, HTH LytTR-type spans Leu-157–Ser-261.

This is an uncharacterized protein from Vibrio cholerae serotype O1 (strain ATCC 39315 / El Tor Inaba N16961).